A 224-amino-acid polypeptide reads, in one-letter code: DNA repair and recombination protein RadB (224 aa).

Belongs to the eukaryotic RecA-like protein family. RadB subfamily.

In terms of biological role, involved in DNA repair and in homologous recombination. May regulate the cleavage reactions of the branch-structured DNA. Has a very weak ATPase activity that is not stimulated by DNA. Binds DNA but does not promote DNA strands exchange. In Thermococcus onnurineus (strain NA1), this protein is DNA repair and recombination protein RadB.